The chain runs to 406 residues: Peptidase T (406 aa).

H80 contacts Zn(2+). D82 is an active-site residue. A Zn(2+)-binding site is contributed by D141. E175 functions as the Proton acceptor in the catalytic mechanism. E176, D198, and H380 together coordinate Zn(2+).

Belongs to the peptidase M20B family. The cofactor is Zn(2+).

It localises to the cytoplasm. It catalyses the reaction Release of the N-terminal residue from a tripeptide.. Its function is as follows. Cleaves the N-terminal amino acid of tripeptides. In Streptococcus mutans serotype c (strain ATCC 700610 / UA159), this protein is Peptidase T.